We begin with the raw amino-acid sequence, 901 residues long: HTH-type transcriptional regulator MalT (901 aa).

39 to 46 (SPAGYGKT) contributes to the ATP binding site. The region spanning 829-894 (ELIRTSPLTQ…AAVQHAQKLL (66 aa)) is the HTH luxR-type domain. Residues 853–872 (NEQIAGELEVAATTIKTHIR) constitute a DNA-binding region (H-T-H motif).

Belongs to the MalT family. Monomer in solution. Oligomerizes to an active state in the presence of the positive effectors ATP and maltotriose.

With respect to regulation, activated by ATP and maltotriose, which are both required for DNA binding. Functionally, positively regulates the transcription of the maltose regulon whose gene products are responsible for uptake and catabolism of malto-oligosaccharides. Specifically binds to the promoter region of its target genes, recognizing a short DNA motif called the MalT box. The polypeptide is HTH-type transcriptional regulator MalT (Escherichia coli (strain 55989 / EAEC)).